The following is a 407-amino-acid chain: Arylacetamide deacetylase-like 4 (407 aa).

At 1-4 (MAVP) the chain is on the cytoplasmic side. The helical; Signal-anchor for type II membrane protein transmembrane segment at 5–25 (WLVLLLALPIFFLGVFVWAVF) threads the bilayer. The Lumenal portion of the chain corresponds to 26–407 (EHFLTTDIPA…NAVVSYIKGI (382 aa)). An Involved in the stabilization of the negatively charged intermediate by the formation of the oxyanion hole motif is present at residues 119–121 (HGG). An N-linked (GlcNAc...) asparagine glycan is attached at N168. S193 is an active-site residue. N269 carries N-linked (GlcNAc...) asparagine glycosylation. Active-site residues include D347 and H377.

The protein belongs to the 'GDXG' lipolytic enzyme family.

It localises to the membrane. This is Arylacetamide deacetylase-like 4 (AADACL4) from Homo sapiens (Human).